An 897-amino-acid polypeptide reads, in one-letter code: Transportin-2 (897 aa).

20 HEAT repeats span residues 9-36 (GLQQ…DKLK), 41-79 (FPDF…AHYQ), 88-121 (FIKQ…KGEL), 127-164 (LLPQ…LDSD), 171-201 (NIMI…QFIM), 214-241 (FIEH…VMLL), 253-280 (HSII…FWLT), 296-386 (VQLI…LANV), 394-422 (HLLP…GAIA), 434-461 (PELI…TLSR), 475-508 (LKPL…EEEA), 516-549 (LSYI…ADSV), 557-595 (EYIQ…TALQ), 603-654 (EPVY…GLGG), 665-696 (IMTL…KACF), 704-737 (AEFM…MQMG), 745-790 (QMVL…YVCP), 798-831 (QQFI…IGVN), 840-871 (IFFC…KDQV), and 874-894 (DNWQ…LAAF). The Importin N-terminal domain maps to 31-99 (VQDKLKQLNQ…KQECLNNIGD (69 aa)). A disordered region spans residues 325–364 (AVPDSEQDIKPRFHKSRTVTLPHEAERPDGSEDAEDDDDD). The segment covering 355–364 (SEDAEDDDDD) has biased composition (acidic residues). Position 862 is an N6-acetyllysine (Lys862).

It belongs to the importin beta family. Importin beta-2 subfamily.

It localises to the cytoplasm. The protein localises to the nucleus. Its function is as follows. Probably functions in nuclear protein import as nuclear transport receptor. Serves as receptor for nuclear localization signals (NLS) in cargo substrates. Is thought to mediate docking of the importin/substrate complex to the nuclear pore complex (NPC) through binding to nucleoporin and the complex is subsequently translocated through the pore by an energy requiring, Ran-dependent mechanism. At the nucleoplasmic side of the NPC, Ran binds to the importin, the importin/substrate complex dissociates and importin is re-exported from the nucleus to the cytoplasm where GTP hydrolysis releases Ran. The directionality of nuclear import is thought to be conferred by an asymmetric distribution of the GTP- and GDP-bound forms of Ran between the cytoplasm and nucleus. The sequence is that of Transportin-2 (TNPO2) from Homo sapiens (Human).